Reading from the N-terminus, the 198-residue chain is Na(+)-translocating NADH-quinone reductase subunit E (198 aa).

6 consecutive transmembrane segments (helical) span residues 11–31 (SIFI…FLAV), 40–60 (GLGI…NLVF), 77–97 (FLGF…LEMF), 110–130 (GIFL…SFMV), 140–160 (VVYG…MAAI), and 176–196 (LGIT…FSGI).

Belongs to the NqrDE/RnfAE family. In terms of assembly, composed of six subunits; NqrA, NqrB, NqrC, NqrD, NqrE and NqrF.

The protein localises to the cell inner membrane. The catalysed reaction is a ubiquinone + n Na(+)(in) + NADH + H(+) = a ubiquinol + n Na(+)(out) + NAD(+). Functionally, NQR complex catalyzes the reduction of ubiquinone-1 to ubiquinol by two successive reactions, coupled with the transport of Na(+) ions from the cytoplasm to the periplasm. NqrA to NqrE are probably involved in the second step, the conversion of ubisemiquinone to ubiquinol. This chain is Na(+)-translocating NADH-quinone reductase subunit E, found in Tolumonas auensis (strain DSM 9187 / NBRC 110442 / TA 4).